The following is an 873-amino-acid chain: MRFGWLEVAALTAASVANAQVFDDSHGNNQELAFSPPFYPSPWADGQGEWADAHRRAVEIVSQMTLAEKVNLTTGTGWEMDRCVGQTGSVPRLGINWGLCGQDSPLGIRFSDLNSAFPAGTNVAATWDKTLAYLRGKAMGEEFNDKGVDILLGPAAGPLGKYPDGGRIWEGFSPDPALTGVLFAETIRGIQDAGVIATAKHYIMNEQEHFRQVSEAQGYGYNITETLSSNVDDKTMHELYLWPFADAVRAGVGAVMCSYNQINNSYGCQNSQTLNKLLKAELGFQGFVMSDWSAHHSGVGSALAGLDMSMPGDISFDDGLSFWGTNLTVSVLNGTVPAWRVDDMAVRIMTAYYKVGRDRLRIPPNFSSWTRDEYGWEHFAVSEGAWTKVNDFVNVQRSHSQIIREIGAASTVLLKNKGALPLTGKEVKVGVLGEDAGSNPWGANGCPDRGCDNGTLAMAWGSGTANFPYLVTPEQAIQREVISNGGNVFAVTDNGALSQMADVASQSSVSLVFVNADSGEGYINVDGNEGDRKNLTLWKNGEAVIDTVVSHCNNTIVVIHSVGPVLIDRWYDNPNVTAIIWAGLPGQESGNSLVDVLYGRVNPSAKTPFTWGKTRKSYGAPLLSEPNNGNGAPQDDFNEGVFIDYRHFDKRNETPIYEFGHGLSYTTFGYSHLRVQALNSSSSAYVPTSGETKPAPTYGEIGSAADYLYPEGLKRITKFIYPLLNSTDLEDSSDDPNYGWEDSEYIPEGARDGSPQPLLKAGGAPGGNPTLYQDLVRVSATITNTGNVAGYEVPQLYVSLGGPNEPRVVLRKFDRIFLAPGEQKVWTTTLNRRDLANWDVEAQDWVITKHPKKVHVGSSSRKLPLRAPLPRVY.

The N-terminal stretch at 1–19 is a signal peptide; it reads MRFGWLEVAALTAASVANA. 3 N-linked (GlcNAc...) asparagine glycosylation sites follow: Asn71, Asn222, and Asn263. The active site involves Asp291. 9 N-linked (GlcNAc...) asparagine glycosylation sites follow: Asn326, Asn333, Asn365, Asn453, Asn534, Asn553, Asn575, Asn679, and Asn725. Positions 730–765 are disordered; sequence EDSSDDPNYGWEDSEYIPEGARDGSPQPLLKAGGAP.

It belongs to the glycosyl hydrolase 3 family.

It localises to the secreted. It carries out the reaction Hydrolysis of terminal, non-reducing beta-D-glucosyl residues with release of beta-D-glucose.. It functions in the pathway glycan metabolism; cellulose degradation. Beta-glucosidases are one of a number of cellulolytic enzymes involved in the degradation of cellulosic biomass. Catalyzes the last step releasing glucose from the inhibitory cellobiose. The polypeptide is Probable beta-glucosidase A (bglA) (Neosartorya fischeri (strain ATCC 1020 / DSM 3700 / CBS 544.65 / FGSC A1164 / JCM 1740 / NRRL 181 / WB 181) (Aspergillus fischerianus)).